Here is a 417-residue protein sequence, read N- to C-terminus: MSKITKIKGFADLFPPESDVFTRMESVARQVFGRYGFVELRTPILERTDLFCRSIGTETDVVQKEMYTFPDRKDRSLTMRPEATAGVMRAYIESGRHTQEPVSKLFTSGPMFRYERPQKGRMRQFHQINCEVLGPVEPHADAELVLMLMRFLTELGLTGLSLQINSLGCKECRPLYRKALSDFLASIDNAALCEDCRRRMETNPLRVLDCKVPGCRELTANAPTILEHNCPECRTHFDAVLRILDSRNVPYVLNDRLVRGLDYYNRTTFEVVSDSIGSQGSVAGGGRYDGLISQLGGPDVPGVGFACGMERLALMMPGADAPRPHFHVAVLDPAAQDAALLLAEDLRAQGLTGSVGFGAGSIKSRMRLAGKSGARACLILGGDELAAGTVVVKDMDSGEQETIGRDAVAARLLAAGA.

Belongs to the class-II aminoacyl-tRNA synthetase family. Homodimer.

The protein resides in the cytoplasm. It carries out the reaction tRNA(His) + L-histidine + ATP = L-histidyl-tRNA(His) + AMP + diphosphate + H(+). This Nitratidesulfovibrio vulgaris (strain ATCC 29579 / DSM 644 / CCUG 34227 / NCIMB 8303 / VKM B-1760 / Hildenborough) (Desulfovibrio vulgaris) protein is Histidine--tRNA ligase.